The primary structure comprises 513 residues: Putative ribose/galactose/methyl galactoside import ATP-binding protein 2 (513 aa).

2 ABC transporter domains span residues 24–260 (LAAD…VGRE) and 270–510 (VPIG…VMDL). 56–63 (GENGAGKS) serves as a coordination point for ATP.

This sequence belongs to the ABC transporter superfamily. Carbohydrate importer 2 (CUT2) (TC 3.A.1.2) family.

It localises to the cell inner membrane. The enzyme catalyses D-ribose(out) + ATP + H2O = D-ribose(in) + ADP + phosphate + H(+). It catalyses the reaction D-galactose(out) + ATP + H2O = D-galactose(in) + ADP + phosphate + H(+). Functionally, part of an ABC transporter complex involved in carbohydrate import. Could be involved in ribose, galactose and/or methyl galactoside import. Responsible for energy coupling to the transport system. The polypeptide is Putative ribose/galactose/methyl galactoside import ATP-binding protein 2 (Agrobacterium fabrum (strain C58 / ATCC 33970) (Agrobacterium tumefaciens (strain C58))).